A 335-amino-acid chain; its full sequence is Dihydroorotate dehydrogenase (quinone) (335 aa).

FMN is bound by residues 58-62 and threonine 82; that span reads AGADK. Lysine 62 contributes to the substrate binding site. 107 to 111 is a substrate binding site; it reads NRNGF. Residues asparagine 135 and asparagine 168 each coordinate FMN. A substrate-binding site is contributed by asparagine 168. The active-site Nucleophile is serine 171. Asparagine 173 is a substrate binding site. Positions 213 and 241 each coordinate FMN. 242 to 243 lines the substrate pocket; it reads NT. FMN-binding positions include glycine 264, glycine 293, and 314–315; that span reads YS.

This sequence belongs to the dihydroorotate dehydrogenase family. Type 2 subfamily. As to quaternary structure, monomer. The cofactor is FMN.

It is found in the cell membrane. The catalysed reaction is (S)-dihydroorotate + a quinone = orotate + a quinol. The protein operates within pyrimidine metabolism; UMP biosynthesis via de novo pathway; orotate from (S)-dihydroorotate (quinone route): step 1/1. Its function is as follows. Catalyzes the conversion of dihydroorotate to orotate with quinone as electron acceptor. In Actinobacillus pleuropneumoniae serotype 5b (strain L20), this protein is Dihydroorotate dehydrogenase (quinone).